Here is a 610-residue protein sequence, read N- to C-terminus: uncharacterized protein (610 aa).

Residues Met1–Pro28 are compositionally biased toward polar residues. The interval Met1–Glu36 is disordered. The RING-type zinc-finger motif lies at Cys41 to Lys82. Disordered stretches follow at residues Tyr390–Ala411 and Thr431–Arg515. Over residues Ser432–Val447 the composition is skewed to low complexity. Acidic residues-rich tracts occupy residues Val448 to Asp470 and Ser478 to Gln487.

This is an uncharacterized protein from Caenorhabditis elegans.